The following is a 270-amino-acid chain: Putative pyruvate, phosphate dikinase regulatory protein (270 aa).

149-156 (GVSRTSKT) is a binding site for ADP.

This sequence belongs to the pyruvate, phosphate/water dikinase regulatory protein family. PDRP subfamily.

It carries out the reaction N(tele)-phospho-L-histidyl/L-threonyl-[pyruvate, phosphate dikinase] + ADP = N(tele)-phospho-L-histidyl/O-phospho-L-threonyl-[pyruvate, phosphate dikinase] + AMP + H(+). It catalyses the reaction N(tele)-phospho-L-histidyl/O-phospho-L-threonyl-[pyruvate, phosphate dikinase] + phosphate + H(+) = N(tele)-phospho-L-histidyl/L-threonyl-[pyruvate, phosphate dikinase] + diphosphate. Its function is as follows. Bifunctional serine/threonine kinase and phosphorylase involved in the regulation of the pyruvate, phosphate dikinase (PPDK) by catalyzing its phosphorylation/dephosphorylation. This Sphingopyxis alaskensis (strain DSM 13593 / LMG 18877 / RB2256) (Sphingomonas alaskensis) protein is Putative pyruvate, phosphate dikinase regulatory protein.